A 327-amino-acid polypeptide reads, in one-letter code: 2-methoxy-6-polyprenyl-1,4-benzoquinol methylase, mitochondrial (327 aa).

Residues 1–49 (MAAPRCCVLWRVCGRGWWRATGHCRLPGCHRSWPWATLGTRSLSQEKRA) constitute a mitochondrion transit peptide. Residues threonine 117, aspartate 171, and 199-200 (DA) contribute to the S-adenosyl-L-methionine site.

This sequence belongs to the class I-like SAM-binding methyltransferase superfamily. MenG/UbiE family. In terms of assembly, component of a multi-subunit COQ enzyme complex, composed of at least COQ3, COQ4, COQ5, COQ6, COQ7 and COQ9. Interacts with PYURF; the interaction is direct, stabilizes COQ5 protein and associates PYURF with COQ enzyme complex.

The protein localises to the mitochondrion inner membrane. It catalyses the reaction 2-methoxy-6-(all-trans-decaprenyl)benzene-1,4-diol + S-adenosyl-L-methionine = 5-methoxy-2-methyl-3-(all-trans-decaprenyl)benzene-1,4-diol + S-adenosyl-L-homocysteine + H(+). Its pathway is cofactor biosynthesis; ubiquinone biosynthesis. Methyltransferase required for the conversion of 2-decaprenyl-6-methoxy-1,4-benzoquinol (DDMQH2) to 2-decaprenyl-3-methyl-6-methoxy-1,4-benzoquinol (DMQH2). This chain is 2-methoxy-6-polyprenyl-1,4-benzoquinol methylase, mitochondrial, found in Mus musculus (Mouse).